The following is a 416-amino-acid chain: N-acetylmuramoyl-L-alanine amidase AmiC (416 aa).

The signal sequence occupies residues 1–26 (MIKLTRRQIIRRTAGTLFALSPIASA). Positions 166-191 (RGSPEADLAQNTTPQPGRGRNGRRPV) are disordered. The MurNAc-LAA domain maps to 192-405 (IMLDPGHGGE…CAQSIASGVQ (214 aa)).

This sequence belongs to the N-acetylmuramoyl-L-alanine amidase 3 family.

The protein resides in the periplasm. It catalyses the reaction Hydrolyzes the link between N-acetylmuramoyl residues and L-amino acid residues in certain cell-wall glycopeptides.. Cell-wall hydrolase involved in septum cleavage during cell division. The sequence is that of N-acetylmuramoyl-L-alanine amidase AmiC (amiC) from Neisseria meningitidis serogroup B (strain ATCC BAA-335 / MC58).